A 319-amino-acid chain; its full sequence is MLCASQASTTTLCSTMDQTSQPSSSSSATIRLGGRAIDRHNPIIRDGRRLTPPPSPNLNPSSSSSSTYHTPLMTRLGLESSEQKRLAKRKSKKGDSDVGKSPVSCFSSDTPQGSSRYLLSNPVFFDGFVDSDPIPIPIDEPEITKADDLNNFHEDRLIINASKYLSTSASFLEKKQPDFFEGFLDYEPVLSPDNPFSEPTKASPTASLSSLEDKDVSSPDFKFSPPPPPPPSPPQSSPPSPPEKNSSSDQVVVLRVSLHCKGCAGKVKKHLSKLKGVTSYNIDFAAKKVTVTGDVTPLTVLASISKVKNAQFWPEIIQK.

Residues Met-1 to Cys-13 show a composition bias toward polar residues. 2 disordered regions span residues Met-1–Gly-113 and Ser-191–Ser-248. The span at Ser-14–Ser-27 shows a compositional bias: low complexity. Positions Ala-36–Arg-49 are enriched in basic and acidic residues. Positions Leu-58 to Thr-67 are enriched in low complexity. Composition is skewed to polar residues over residues Ser-104–Gly-113 and Thr-200–Ser-210. The span at Ser-224–Pro-242 shows a compositional bias: pro residues. Residues Asp-249–Glu-315 enclose the HMA domain. Cys-260 and Cys-263 together coordinate Zn(2+).

Interacts with FT, but not with TSF (TWIN SISTER OF FT). As to expression, expressed in vascular tissues of cotyledons, rosette leaves and roots in developing seedlings before and during the floral transition. Expressed specifically in the phloem companion cells. Not detected in embryos or seeds. Not detected in the vegetative shoot apex.

The protein resides in the cytoplasm. It is found in the nucleus. The protein localises to the endoplasmic reticulum. Its function is as follows. Required for root meristem maintenance after germination. Involved in phloem translocation, starch accumulation and flowering. Promotes flowering in the photoperiod pathway. Regulates long-distance movement of FT from leaves to the shoot apex through the phloem stream. The protein is Protein SODIUM POTASSIUM ROOT DEFECTIVE 1 of Arabidopsis thaliana (Mouse-ear cress).